We begin with the raw amino-acid sequence, 275 residues long: Penicillin-insensitive murein endopeptidase (275 aa).

A signal peptide spans 1–19 (MKNWIVGMVALVTMVPVMA). Intrachain disulfides connect Cys44-Cys264, Cys187-Cys235, and Cys216-Cys223. Zn(2+) is bound by residues His110, His113, Asp120, Asp147, and His211. The interval 227–262 (DTPPPGDGCGAELESWFQPPPPSAKPGKTLPPPLPP) is disordered. A compositionally biased stretch (pro residues) spans 244–262 (QPPPPSAKPGKTLPPPLPP).

This sequence belongs to the peptidase M74 family. Dimer. The cofactor is Zn(2+).

It localises to the periplasm. Its function is as follows. Murein endopeptidase that cleaves the D-alanyl-meso-2,6-diamino-pimelyl amide bond that connects peptidoglycan strands. Likely plays a role in the removal of murein from the sacculus. The sequence is that of Penicillin-insensitive murein endopeptidase from Yersinia pestis bv. Antiqua (strain Antiqua).